We begin with the raw amino-acid sequence, 312 residues long: Very-long-chain 3-oxoacyl-CoA reductase (312 aa).

The helical transmembrane segment at 4 to 24 threads the bilayer; that stretch reads APPAAGFLYWVGASTIAYLAL. 50-79 is an NADP(+) binding site; it reads GEWAVVTGGTDGIGKAYAEELAKRGMKIVL. The next 2 helical transmembrane spans lie at 182 to 202 and 269 to 285; these read GVIL…LTIY and TTGY…NSIM. Ser189 contacts substrate. Tyr202 acts as the Proton acceptor in catalysis. Residues 308–312 carry the Di-lysine motif motif; the sequence is KRKKN.

This sequence belongs to the short-chain dehydrogenases/reductases (SDR) family. 17-beta-HSD 3 subfamily. As to expression, expressed in most tissues tested.

The protein resides in the endoplasmic reticulum membrane. It catalyses the reaction a very-long-chain (3R)-3-hydroxyacyl-CoA + NADP(+) = a very-long-chain 3-oxoacyl-CoA + NADPH + H(+). It carries out the reaction 17beta-estradiol + NAD(+) = estrone + NADH + H(+). The catalysed reaction is 17beta-estradiol + NADP(+) = estrone + NADPH + H(+). The enzyme catalyses 3-oxooctadecanoyl-CoA + NADPH + H(+) = (3R)-hydroxyoctadecanoyl-CoA + NADP(+). It catalyses the reaction (7Z,10Z,13Z,16Z)-3-oxodocosatetraenoyl-CoA + NADPH + H(+) = (3R)-hydroxy-(7Z,10Z,13Z,16Z)-docosatetraenoyl-CoA + NADP(+). It carries out the reaction 3-oxo-(7Z,10Z,13Z,16Z,19Z)-docosapentaenoyl-CoA + NADPH + H(+) = (3R)-hydroxy-(7Z,10Z,13Z,16Z,19Z)-docosapentaenoyl-CoA + NADP(+). The catalysed reaction is (8Z,11Z,14Z)-3-oxoeicosatrienoyl-CoA + NADPH + H(+) = (3R)-hydroxy-(8Z,11Z,14Z)-eicosatrienoyl-CoA + NADP(+). It participates in lipid metabolism; fatty acid biosynthesis. The protein operates within steroid biosynthesis; estrogen biosynthesis. Functionally, catalyzes the second of the four reactions of the long-chain fatty acids elongation cycle. This endoplasmic reticulum-bound enzymatic process, allows the addition of two carbons to the chain of long- and very long-chain fatty acids/VLCFAs per cycle. This enzyme has a 3-ketoacyl-CoA reductase activity, reducing 3-ketoacyl-CoA to 3-hydroxyacyl-CoA, within each cycle of fatty acid elongation. Thereby, it may participate in the production of VLCFAs of different chain lengths that are involved in multiple biological processes as precursors of membrane lipids and lipid mediators. May also catalyze the transformation of estrone (E1) into estradiol (E2) and play a role in estrogen formation. This Mus musculus (Mouse) protein is Very-long-chain 3-oxoacyl-CoA reductase.